The sequence spans 405 residues: MDHLPMPKFGPLAGLRVVFSGIEIAGPFAGQMFAEWGAEVIWIENVAWADTIRVQPNYPQLSRRNLHALSLNIFKDEGREAFLKLMETTDIFIEASKGPAFARRGITDEVLWQHNPKLVIAHLSGFGQYGTEEYTNLPAYNTIAQAFSGYLIQNGDVDQPMPAFPYTADYFSGLTATTAALAALHKVRETGKGESIDIAMYEVMLRMGQYFMMDYFNGGEMCPRMSKGKDPYYAGCGLYKCADGYIVMELVGITQIEECFKDIGLAHLLSTPEIPEGTQLIHRIECPYGPLVEEKLDAWLAAHTIAEVKERFAELNIACAKVLTVPELESNPQYVARESITQWQTMDGRTCKGPNIMPKFKNNPGQIWRGMPSHGMDTAAILKNIGYSENDIQELVSKGLAKVED.

Residues Lys97 and Arg104 each coordinate CoA. Catalysis depends on Asp169, which acts as the Nucleophile.

It belongs to the CoA-transferase III family. CaiB subfamily. In terms of assembly, homodimer.

The protein resides in the cytoplasm. It catalyses the reaction crotonobetainyl-CoA + (R)-carnitine = crotonobetaine + (R)-carnitinyl-CoA. The catalysed reaction is 4-(trimethylamino)butanoyl-CoA + (R)-carnitine = (R)-carnitinyl-CoA + 4-(trimethylamino)butanoate. It participates in amine and polyamine metabolism; carnitine metabolism. Functionally, catalyzes the reversible transfer of the CoA moiety from gamma-butyrobetainyl-CoA to L-carnitine to generate L-carnitinyl-CoA and gamma-butyrobetaine. Is also able to catalyze the reversible transfer of the CoA moiety from gamma-butyrobetainyl-CoA or L-carnitinyl-CoA to crotonobetaine to generate crotonobetainyl-CoA. The polypeptide is L-carnitine CoA-transferase (Escherichia coli (strain SE11)).